The chain runs to 408 residues: Prenyltransferase criF (408 aa).

Dimethylallyl diphosphate contacts are provided by arginine 94, lysine 181, tyrosine 183, arginine 248, lysine 250, tyrosine 252, glutamine 334, tyrosine 336, tyrosine 400, and tyrosine 404.

It belongs to the tryptophan dimethylallyltransferase family. Homodimer.

It catalyses the reaction preechinulin + dimethylallyl diphosphate = tardioxopiperazine B + diphosphate. The catalysed reaction is preechinulin + dimethylallyl diphosphate = tardioxopiperazine A + diphosphate. It carries out the reaction tardioxopiperazine A + dimethylallyl diphosphate = echinulin + diphosphate. The enzyme catalyses tardioxopiperazine A + dimethylallyl diphosphate = variecolorin L + diphosphate. It catalyses the reaction neoechinulin A + dimethylallyl diphosphate = variecolorin G + diphosphate. The catalysed reaction is neoechinulin A + dimethylallyl diphosphate = isoechinulin A + diphosphate. It carries out the reaction isoechinulin A + dimethylallyl diphosphate = dehydroechinulin + diphosphate. The enzyme catalyses neoechinulin B + dimethylallyl diphosphate = isoechinulin B + diphosphate. The protein operates within secondary metabolite biosynthesis. It participates in alkaloid biosynthesis. Functionally, prenyltransferase; part of the gene cluster that mediates the biosynthesis of echinulin family alkaloid. The pathway begins with the biosynthesis of the cyclic dipeptide cyclo-L-Trp-L-Ala (cyclo-TA) by the NRPS criC via condensation of L-alanine and L-tryptophan. The prenyltransferase criA then catalyzes the first prenylation step, a reverse prenylation reaction at C2, to yield preechinulin. Preechinulin is the substrate of the cytochrome P450 monooxygenase criE that catalyzes the formation of the double bond between C10 and C11 to produce neoechulin A. The unique prenyltransferase criF functions as a competitive enzyme with criE for preechinulin metabolization and uses preechinulin for effective regiospecific prenylations. Preechinulin is prenylated by criF at C5 or C7. C7-prenylation leads to accumulation of tardioxopiperazine B without further modification by criF. In contrast, the C5-prenylated tardioxopiperazine A can be prenylated again by criF, predominantly at C7 to form echinulin or less frequently at C4 to give variecolorin L. CriF also accepts neoechilunin A to produce varlecolorin G (prenylation at C5) or isoechinulin A (prenylation at C7). CriF further converts isoechinulin A into dehydroechinulin. Moreover, a yet unidentified enzyme can also convert neoechilunin A into neoechilunin B by introducing a double bond between positions C14 and C17 and thus provides a further substrate to criF for C5 and C7 prenylation. This is Prenyltransferase criF from Aspergillus cristatus (Chinese Fuzhuan brick tea-fermentation fungus).